Here is a 177-residue protein sequence, read N- to C-terminus: Large ribosomal subunit protein uL6 (177 aa).

The protein belongs to the universal ribosomal protein uL6 family. In terms of assembly, part of the 50S ribosomal subunit.

Functionally, this protein binds to the 23S rRNA, and is important in its secondary structure. It is located near the subunit interface in the base of the L7/L12 stalk, and near the tRNA binding site of the peptidyltransferase center. This is Large ribosomal subunit protein uL6 from Delftia acidovorans (strain DSM 14801 / SPH-1).